The primary structure comprises 99 residues: Transcriptional regulator WhiB2 (99 aa).

Residues 33 to 90 form the 4Fe-4S Wbl-type domain; the sequence is LCAQTDPEAFFPEKGGSTRDAKRVCAKCEVREQCLKWAIDHDERFGIWGGMSERERRR. [4Fe-4S] cluster-binding residues include cysteine 34, cysteine 57, cysteine 60, and cysteine 66.

Belongs to the WhiB family. Requires [4Fe-4S] cluster as cofactor. Post-translationally, the Fe-S cluster can be nitrosylated by nitric oxide (NO). In terms of processing, upon Fe-S cluster removal intramolecular disulfide bonds are formed.

The protein resides in the cytoplasm. Its function is as follows. Acts as a transcriptional regulator. Probably redox-responsive. The apo- but not holo-form probably binds DNA. This is Transcriptional regulator WhiB2 (whiB2) from Bifidobacterium longum (strain NCC 2705).